A 118-amino-acid chain; its full sequence is Hydrogenase maturation factor HypA (118 aa).

Residue His-2 participates in Ni(2+) binding. Cys-73, Cys-76, Cys-90, and Cys-93 together coordinate Zn(2+).

Belongs to the HypA/HybF family.

In terms of biological role, involved in the maturation of [NiFe] hydrogenases. Required for nickel insertion into the metal center of the hydrogenase. This chain is Hydrogenase maturation factor HypA, found in Salmonella typhi.